The primary structure comprises 504 residues: Maturase K (504 aa).

The protein belongs to the intron maturase 2 family. MatK subfamily.

The protein localises to the plastid. It is found in the chloroplast. Functionally, usually encoded in the trnK tRNA gene intron. Probably assists in splicing its own and other chloroplast group II introns. This is Maturase K from Lepidium campestre (Field pepperwort).